Here is a 389-residue protein sequence, read N- to C-terminus: Cytochrome b (389 aa).

The next 4 helical transmembrane spans lie at 32-52, 76-98, 113-133, and 179-199; these read FGSL…FLAM, WLIR…LHIA, TWTI…LGYT, and FFSL…MHMI. Heme b-binding residues include H82 and H96. H183 and H197 together coordinate heme b. H202 contacts a ubiquinone. Transmembrane regions (helical) follow at residues 225 to 245, 289 to 309, 321 to 341, and 348 to 368; these read YLIK…IIIF, LFGV…PLLD, IGKL…FIGA, and YVAI…FFIP.

This sequence belongs to the cytochrome b family. In terms of assembly, fungal cytochrome b-c1 complex contains 10 subunits; 3 respiratory subunits, 2 core proteins and 5 low-molecular weight proteins. Cytochrome b-c1 complex is a homodimer. Heme b is required as a cofactor.

Its subcellular location is the mitochondrion inner membrane. In terms of biological role, component of the ubiquinol-cytochrome c reductase complex (complex III or cytochrome b-c1 complex) that is part of the mitochondrial respiratory chain. The b-c1 complex mediates electron transfer from ubiquinol to cytochrome c. Contributes to the generation of a proton gradient across the mitochondrial membrane that is then used for ATP synthesis. The protein is Cytochrome b (cob) of Schizosaccharomyces japonicus (Fission yeast).